Consider the following 512-residue polypeptide: Na(+)/H(+) antiporter NhaB (512 aa).

11 helical membrane passes run 28–48 (FLIINPLVFIFQPFMAGWLLV), 52–72 (IFTLAMALKCYPLLPGGLLAI), 97–117 (LLLMFMVAGIYFMKQLLLFIF), 144–164 (FLDALTVVAVVISVAIGFYGI), 201–221 (LMMHAGVGTALGGVMTMVGEP), 237–257 (FFLRVAPVSVPVFICGMLTCF), 296–330 (LALIAQGIIGAWLIFALAFHLAEVGLIGLSVIILA), 347–367 (TEALPFTALLAVFFAIVAVII), 390–410 (LFYLFNGLLSSISDNVFVGSV), 446–466 (ATPNGQAAFLFLLTSALAPLI), and 474–494 (VWMALPYTVVLTLVGLLCVKF).

This sequence belongs to the NhaB Na(+)/H(+) (TC 2.A.34) antiporter family.

It localises to the cell inner membrane. The catalysed reaction is 2 Na(+)(in) + 3 H(+)(out) = 2 Na(+)(out) + 3 H(+)(in). Its function is as follows. Na(+)/H(+) antiporter that extrudes sodium in exchange for external protons. This is Na(+)/H(+) antiporter NhaB from Enterobacter sp. (strain 638).